The sequence spans 243 residues: Ubiquinone/menaquinone biosynthesis C-methyltransferase UbiE (243 aa).

S-adenosyl-L-methionine contacts are provided by residues Thr-69, Asp-90, and 116–117; that span reads DA.

It belongs to the class I-like SAM-binding methyltransferase superfamily. MenG/UbiE family.

It carries out the reaction a 2-demethylmenaquinol + S-adenosyl-L-methionine = a menaquinol + S-adenosyl-L-homocysteine + H(+). The enzyme catalyses a 2-methoxy-6-(all-trans-polyprenyl)benzene-1,4-diol + S-adenosyl-L-methionine = a 5-methoxy-2-methyl-3-(all-trans-polyprenyl)benzene-1,4-diol + S-adenosyl-L-homocysteine + H(+). The protein operates within quinol/quinone metabolism; menaquinone biosynthesis; menaquinol from 1,4-dihydroxy-2-naphthoate: step 2/2. It functions in the pathway cofactor biosynthesis; ubiquinone biosynthesis. In terms of biological role, methyltransferase required for the conversion of demethylmenaquinol (DMKH2) to menaquinol (MKH2) and the conversion of 2-polyprenyl-6-methoxy-1,4-benzoquinol (DDMQH2) to 2-polyprenyl-3-methyl-6-methoxy-1,4-benzoquinol (DMQH2). The protein is Ubiquinone/menaquinone biosynthesis C-methyltransferase UbiE of Paraburkholderia phytofirmans (strain DSM 17436 / LMG 22146 / PsJN) (Burkholderia phytofirmans).